The sequence spans 321 residues: Annexin D3 (321 aa).

An N-acetylalanine modification is found at Ala-2. Annexin repeat units follow at residues 11–82 (PSPA…SWTY), 83–159 (DPAE…TLAS), 171–243 (EVAT…VAIF), and 247–318 (TPEK…TLLG). Ca(2+) is bound by residues Gly-26, Gly-28, and Glu-68. The residue at position 117 (Thr-117) is a Phosphothreonine. Ca(2+) contacts are provided by Ile-260 and Gly-264. Tyr-289 carries the phosphotyrosine modification. Asp-304 is a Ca(2+) binding site.

Belongs to the annexin (TC 1.A.31.1) family. Expressed mainly in roots and flowers. Lower in stems and leaves.

The chain is Annexin D3 (ANN3) from Arabidopsis thaliana (Mouse-ear cress).